The following is a 95-amino-acid chain: Aspartyl/glutamyl-tRNA(Asn/Gln) amidotransferase subunit C (95 aa).

This sequence belongs to the GatC family. As to quaternary structure, heterotrimer of A, B and C subunits.

The catalysed reaction is L-glutamyl-tRNA(Gln) + L-glutamine + ATP + H2O = L-glutaminyl-tRNA(Gln) + L-glutamate + ADP + phosphate + H(+). It catalyses the reaction L-aspartyl-tRNA(Asn) + L-glutamine + ATP + H2O = L-asparaginyl-tRNA(Asn) + L-glutamate + ADP + phosphate + 2 H(+). Its function is as follows. Allows the formation of correctly charged Asn-tRNA(Asn) or Gln-tRNA(Gln) through the transamidation of misacylated Asp-tRNA(Asn) or Glu-tRNA(Gln) in organisms which lack either or both of asparaginyl-tRNA or glutaminyl-tRNA synthetases. The reaction takes place in the presence of glutamine and ATP through an activated phospho-Asp-tRNA(Asn) or phospho-Glu-tRNA(Gln). In Maricaulis maris (strain MCS10) (Caulobacter maris), this protein is Aspartyl/glutamyl-tRNA(Asn/Gln) amidotransferase subunit C.